The chain runs to 152 residues: Large ribosomal subunit protein uL15 (152 aa).

The disordered stretch occupies residues Met-1–Gln-55. Positions Gly-28–Ser-42 are enriched in polar residues.

It belongs to the universal ribosomal protein uL15 family. As to quaternary structure, part of the 50S ribosomal subunit.

Its function is as follows. Binds to the 23S rRNA. This is Large ribosomal subunit protein uL15 from Sulfurihydrogenibium sp. (strain YO3AOP1).